Reading from the N-terminus, the 647-residue chain is DNA ligase (647 aa).

NAD(+)-binding positions include 30–34 (DEEYD), 79–80 (SM), and Glu105. The N6-AMP-lysine intermediate role is filled by Lys107. Residues Arg128, Glu162, and Lys301 each contribute to the NAD(+) site. Zn(2+) contacts are provided by Cys395, Cys398, Cys411, and Cys416. The BRCT domain occupies 570–647 (KSDGVIFGKT…ESAFNELVKE (78 aa)).

Belongs to the NAD-dependent DNA ligase family. LigA subfamily. Mg(2+) is required as a cofactor. Mn(2+) serves as cofactor.

It carries out the reaction NAD(+) + (deoxyribonucleotide)n-3'-hydroxyl + 5'-phospho-(deoxyribonucleotide)m = (deoxyribonucleotide)n+m + AMP + beta-nicotinamide D-nucleotide.. Functionally, DNA ligase that catalyzes the formation of phosphodiester linkages between 5'-phosphoryl and 3'-hydroxyl groups in double-stranded DNA using NAD as a coenzyme and as the energy source for the reaction. It is essential for DNA replication and repair of damaged DNA. This Campylobacter jejuni subsp. jejuni serotype O:6 (strain 81116 / NCTC 11828) protein is DNA ligase.